A 473-amino-acid chain; its full sequence is Photosystem II CP43 reaction center protein (473 aa).

Positions 1–14 are excised as a propeptide; that stretch reads MKTLYSLRRYFHVE. Position 15 is an N-acetylthreonine (T15). T15 carries the phosphothreonine modification. 5 helical membrane-spanning segments follow: residues 69–93, 134–155, 178–200, 255–275, and 291–312; these read LFEVAHFVPEKPMYEQGLILLPHLA, LIGPETLEESYPFFGYLWKDKN, KAMYFGGVYDTWAPGGGDVRVIS, KPFAWARRAFVWSGEAYLSYS, and WFNNTVYPSEFFGPTGPEASQA. Residue E367 coordinates [CaMn4O5] cluster. Residues 447 to 471 form a helical membrane-spanning segment; it reads RARAAAAGFEKGIDRDTEPVLSMRP.

It belongs to the PsbB/PsbC family. PsbC subfamily. In terms of assembly, PSII is composed of 1 copy each of membrane proteins PsbA, PsbB, PsbC, PsbD, PsbE, PsbF, PsbH, PsbI, PsbJ, PsbK, PsbL, PsbM, PsbT, PsbX, PsbY, PsbZ, Psb30/Ycf12, at least 3 peripheral proteins of the oxygen-evolving complex and a large number of cofactors. It forms dimeric complexes. Requires Binds multiple chlorophylls and provides some of the ligands for the Ca-4Mn-5O cluster of the oxygen-evolving complex. It may also provide a ligand for a Cl- that is required for oxygen evolution. PSII binds additional chlorophylls, carotenoids and specific lipids. as cofactor.

It localises to the plastid. It is found in the chloroplast thylakoid membrane. One of the components of the core complex of photosystem II (PSII). It binds chlorophyll and helps catalyze the primary light-induced photochemical processes of PSII. PSII is a light-driven water:plastoquinone oxidoreductase, using light energy to abstract electrons from H(2)O, generating O(2) and a proton gradient subsequently used for ATP formation. This is Photosystem II CP43 reaction center protein from Ostreococcus tauri.